The primary structure comprises 615 residues: MAFNFNWSPLTADAGFYERARDLLTTALNKSPKPPIIVDDIFVTELNLGSVPPDLEILEIGDLAEDRFRGIFKMCYSGDAFLTLATRVQANPLNTYISAKPSFTSPEPLTASSSLTIPLQITLSEIKLSAFIILVFSKQKGLTIVFRNDPLESLKVSSTFDSIQFVRDYLQKTIEMKLRDLIMDELPAIIHRLSLQLWCPDQVPKEDEEAKEESDAAINPLATPPLDAVDAHGHRLDPAEISSLSLDGGPETQSLFSQKNLEKMDALASAHRTSSLLTPNILEVVFRAWAGQSDKPDATATPASTPNLHRTSSYQGSVHTYTFSDNSSQASGHALSRPTLVSMGSATTGLSLGSGRHSKAGRKKKMRVVNLRSKTAVSEPVSEIGSTSSQAGDSHTEASTRTPMSEPVIPTTIREVPEDDLAASQSKVRFRPPTDATTSARASESSGPRAAVPSVPVTAQPSRATSSQEHVYTRQPSMFPSSPAPQTSAQEMPPSYSSRVSEKAESTASIYADAKGQQQQFQQQQQQQQQQQQQQQQQQQQQQQQQQQQQQQQQQQQWGRAGPQPDMSSVILEQAWITKIAGEIARRVYDEKNRNPAFWEDSHQHDIPPPAYEPR.

The SMP-LTD domain maps to 1-195; the sequence is MAFNFNWSPL…LPAIIHRLSL (195 aa). Disordered regions lie at residues 293-313, 346-566, and 596-615; these read SDKPDATATPASTPNLHRTSS, ATTG…PQPD, and PAFWEDSHQHDIPPPAYEPR. Residues 301–313 show a composition bias toward polar residues; sequence TPASTPNLHRTSS. Positions 346 to 355 are enriched in low complexity; it reads ATTGLSLGSG. The span at 356-367 shows a compositional bias: basic residues; sequence RHSKAGRKKKMR. Composition is skewed to polar residues over residues 384-403, 435-446, and 457-499; these read IGSTSSQAGDSHTEASTRTP, DATTSARASESS, and VTAQ…YSSR. The span at 517 to 557 shows a compositional bias: low complexity; it reads QQQQFQQQQQQQQQQQQQQQQQQQQQQQQQQQQQQQQQQQQ. Basic and acidic residues predominate over residues 596 to 606; sequence PAFWEDSHQHD.

It belongs to the MDM34 family. As to quaternary structure, component of the ER-mitochondria encounter structure (ERMES) or MDM complex, composed of mmm-1, mdm10, mdm12 and mdm34.

It localises to the mitochondrion outer membrane. Functionally, component of the ERMES/MDM complex, which serves as a molecular tether to connect the endoplasmic reticulum (ER) and mitochondria. Components of this complex are involved in the control of mitochondrial shape and protein biogenesis, and function in nonvesicular lipid trafficking between the ER and mitochondria. Mdm34 is required for the interaction of the ER-resident membrane protein mmm-1 and the outer mitochondrial membrane-resident beta-barrel protein mdm10. The sequence is that of Mitochondrial distribution and morphology protein 34 from Neurospora crassa (strain ATCC 24698 / 74-OR23-1A / CBS 708.71 / DSM 1257 / FGSC 987).